Reading from the N-terminus, the 248-residue chain is MGEQLKKQPVLRGGGFTFKQFFVAHDRCAMKVGTDGVLLGAWVPVLHARRVLDIGCGSGLIALMIAQRSLPQVQIDGVELEPAAAQQASSNVELSPWAERIHIHQQDIHQFAENHPHQYDLIVSNPPYFAPAIACRDEARDTARYTGSLTHDALLNCAEKLITEDGMFCVVLPHELGIEFARLAGQQGWFVRCQVDIRDRPGKPLHRMLLTLSRQAGETVYQHLALRQSEGVYSPEFCQLISDFYLNY.

The protein belongs to the methyltransferase superfamily. tRNA (adenine-N(6)-)-methyltransferase family.

The protein resides in the cytoplasm. It catalyses the reaction adenosine(37) in tRNA1(Val) + S-adenosyl-L-methionine = N(6)-methyladenosine(37) in tRNA1(Val) + S-adenosyl-L-homocysteine + H(+). In terms of biological role, specifically methylates the adenine in position 37 of tRNA(1)(Val) (anticodon cmo5UAC). The sequence is that of tRNA1(Val) (adenine(37)-N6)-methyltransferase from Yersinia pseudotuberculosis serotype O:1b (strain IP 31758).